The chain runs to 460 residues: Light-independent protochlorophyllide reductase subunit N (460 aa).

The [4Fe-4S] cluster site is built by C22, C47, and C107.

It belongs to the BchN/ChlN family. In terms of assembly, protochlorophyllide reductase is composed of three subunits; ChlL, ChlN and ChlB. Forms a heterotetramer of two ChlB and two ChlN subunits. [4Fe-4S] cluster is required as a cofactor.

It catalyses the reaction chlorophyllide a + oxidized 2[4Fe-4S]-[ferredoxin] + 2 ADP + 2 phosphate = protochlorophyllide a + reduced 2[4Fe-4S]-[ferredoxin] + 2 ATP + 2 H2O. It participates in porphyrin-containing compound metabolism; chlorophyll biosynthesis (light-independent). Functionally, component of the dark-operative protochlorophyllide reductase (DPOR) that uses Mg-ATP and reduced ferredoxin to reduce ring D of protochlorophyllide (Pchlide) to form chlorophyllide a (Chlide). This reaction is light-independent. The NB-protein (ChlN-ChlB) is the catalytic component of the complex. In Thermosynechococcus vestitus (strain NIES-2133 / IAM M-273 / BP-1), this protein is Light-independent protochlorophyllide reductase subunit N.